A 99-amino-acid chain; its full sequence is Small ribosomal subunit protein bS20 (99 aa).

It belongs to the bacterial ribosomal protein bS20 family.

Functionally, binds directly to 16S ribosomal RNA. The protein is Small ribosomal subunit protein bS20 of Prochlorococcus marinus (strain SARG / CCMP1375 / SS120).